The sequence spans 249 residues: Putative TrmH family tRNA/rRNA methyltransferase YacO (249 aa).

Residues Gly198, Leu218, and Leu227 each contribute to the S-adenosyl-L-methionine site.

Belongs to the class IV-like SAM-binding methyltransferase superfamily. RNA methyltransferase TrmH family.

The chain is Putative TrmH family tRNA/rRNA methyltransferase YacO (yacO) from Bacillus subtilis (strain 168).